We begin with the raw amino-acid sequence, 301 residues long: Bifunctional protein FolD (301 aa).

NADP(+) contacts are provided by residues 166–168 (GKS), Ser191, and Ile232.

This sequence belongs to the tetrahydrofolate dehydrogenase/cyclohydrolase family. In terms of assembly, homodimer.

It carries out the reaction (6R)-5,10-methylene-5,6,7,8-tetrahydrofolate + NADP(+) = (6R)-5,10-methenyltetrahydrofolate + NADPH. The enzyme catalyses (6R)-5,10-methenyltetrahydrofolate + H2O = (6R)-10-formyltetrahydrofolate + H(+). It functions in the pathway one-carbon metabolism; tetrahydrofolate interconversion. Functionally, catalyzes the oxidation of 5,10-methylenetetrahydrofolate to 5,10-methenyltetrahydrofolate and then the hydrolysis of 5,10-methenyltetrahydrofolate to 10-formyltetrahydrofolate. The polypeptide is Bifunctional protein FolD (Orientia tsutsugamushi (strain Ikeda) (Rickettsia tsutsugamushi)).